An 879-amino-acid polypeptide reads, in one-letter code: Protein P (879 aa).

Residues 1-184 (MHPFSRLFRN…GKPYSWEHRQ (184 aa)) form a terminal protein domain (TP) region. Residues 185-382 (LVQHNGQQHK…YCIHHIVSSI (198 aa)) are spacer. Residues 304 to 345 (SASNSNKSRSREKAYSSNSTSKRYSPPLNYEKSDFSSPGVRG) form a disordered region. Residues 383–724 (DDWGPCTVTG…YEELWPVVRQ (342 aa)) form a polymerase/reverse transcriptase domain (RT) region. A Reverse transcriptase domain is found at 393-634 (DVTIKSPRTP…NHLHFMGYVI (242 aa)). Asp-465, Asp-585, and Asp-586 together coordinate Mg(2+).

It belongs to the hepadnaviridae P protein family.

It carries out the reaction DNA(n) + a 2'-deoxyribonucleoside 5'-triphosphate = DNA(n+1) + diphosphate. The enzyme catalyses Endonucleolytic cleavage to 5'-phosphomonoester.. Its activity is regulated as follows. Activated by host HSP70 and HSP40 in vitro to be able to bind the epsilon loop of the pgRNA. Because deletion of the RNase H region renders the protein partly chaperone-independent, the chaperones may be needed indirectly to relieve occlusion of the RNA-binding site by this domain. Inhibited by several reverse-transcriptase inhibitors: Lamivudine, Adefovir and Entecavir. Its function is as follows. Multifunctional enzyme that converts the viral RNA genome into dsDNA in viral cytoplasmic capsids. This enzyme displays a DNA polymerase activity that can copy either DNA or RNA templates, and a ribonuclease H (RNase H) activity that cleaves the RNA strand of RNA-DNA heteroduplexes in a partially processive 3'- to 5'-endonucleasic mode. Neo-synthesized pregenomic RNA (pgRNA) are encapsidated together with the P protein, and reverse-transcribed inside the nucleocapsid. Initiation of reverse-transcription occurs first by binding the epsilon loop on the pgRNA genome, and is initiated by protein priming, thereby the 5'-end of (-)DNA is covalently linked to P protein. Partial (+)DNA is synthesized from the (-)DNA template and generates the relaxed circular DNA (RC-DNA) genome. After budding and infection, the RC-DNA migrates in the nucleus, and is converted into a plasmid-like covalently closed circular DNA (cccDNA). The activity of P protein does not seem to be necessary for cccDNA generation, and is presumably released from (+)DNA by host nuclear DNA repair machinery. This is Protein P from Woodchuck hepatitis B virus (isolate 1) (WHV).